A 227-amino-acid polypeptide reads, in one-letter code: MKRTKNINQETFRKSWRSYRLAPVALAVSAVFMLAGCEKTDETVSLYQNADDCSQANPSQSAECTTAYNTALQEAVKTAPKYATREDCVAEFGESQCTQAPAQAGMVPTSSSETTAAAPQQSGSMWMPLMAGYMMGRMMGGGASQPLFTSKAPNSPANGKFVDASGKNFGAATTGRTMTVPKTALAPKPAVTKTITRGGFGESVAKQSSMQRSAATSSKTTTRSMGG.

Positions 198–227 (GGFGESVAKQSSMQRSAATSSKTTTRSMGG) are disordered. Positions 212-227 (RSAATSSKTTTRSMGG) are enriched in low complexity.

It belongs to the UPF0441 family.

The chain is UPF0441 protein YPO0661/y3517/YP_2976 from Yersinia pestis.